We begin with the raw amino-acid sequence, 421 residues long: Enolase (421 aa).

Gln161 contacts (2R)-2-phosphoglycerate. Glu203 functions as the Proton donor in the catalytic mechanism. Mg(2+) is bound by residues Asp240, Glu283, and Asp310. (2R)-2-phosphoglycerate contacts are provided by Lys335, Arg364, Ser365, and Lys386. The active-site Proton acceptor is the Lys335.

Belongs to the enolase family. The cofactor is Mg(2+).

It is found in the cytoplasm. The protein resides in the secreted. Its subcellular location is the cell surface. It carries out the reaction (2R)-2-phosphoglycerate = phosphoenolpyruvate + H2O. The protein operates within carbohydrate degradation; glycolysis; pyruvate from D-glyceraldehyde 3-phosphate: step 4/5. Functionally, catalyzes the reversible conversion of 2-phosphoglycerate (2-PG) into phosphoenolpyruvate (PEP). It is essential for the degradation of carbohydrates via glycolysis. This chain is Enolase, found in Sulfurimonas denitrificans (strain ATCC 33889 / DSM 1251) (Thiomicrospira denitrificans (strain ATCC 33889 / DSM 1251)).